The primary structure comprises 179 residues: Inosine/xanthosine triphosphatase (179 aa).

Residue 8–13 (TTNPAK) participates in substrate binding. Mg(2+) contacts are provided by Asp-38 and Glu-68. Position 68-69 (68-69 (EA)) interacts with substrate.

This sequence belongs to the YjjX NTPase family. Homodimer. Mg(2+) serves as cofactor. Requires Mn(2+) as cofactor.

It carries out the reaction XTP + H2O = XDP + phosphate + H(+). It catalyses the reaction ITP + H2O = IDP + phosphate + H(+). In terms of biological role, phosphatase that hydrolyzes non-canonical purine nucleotides such as XTP and ITP to their respective diphosphate derivatives. Probably excludes non-canonical purines from DNA/RNA precursor pool, thus preventing their incorporation into DNA/RNA and avoiding chromosomal lesions. The chain is Inosine/xanthosine triphosphatase from Pectobacterium carotovorum subsp. carotovorum (strain PC1).